Reading from the N-terminus, the 267-residue chain is GTP cyclohydrolase MptA (267 aa).

It belongs to the GTP cyclohydrolase IV family. As to quaternary structure, homodimer. Requires Fe(2+) as cofactor.

The enzyme catalyses GTP + H2O = 7,8-dihydroneopterin 2',3'-cyclic phosphate + formate + diphosphate + H(+). Its pathway is cofactor biosynthesis; 5,6,7,8-tetrahydromethanopterin biosynthesis. Converts GTP to 7,8-dihydro-D-neopterin 2',3'-cyclic phosphate, the first intermediate in the biosynthesis of coenzyme methanopterin. This Pyrococcus furiosus (strain ATCC 43587 / DSM 3638 / JCM 8422 / Vc1) protein is GTP cyclohydrolase MptA.